A 508-amino-acid chain; its full sequence is O-acetyltransferase pigM (508 aa).

The tract at residues 166–188 (TPAPDERGKISPSLEDAAGSPRT) is disordered.

It participates in secondary metabolite biosynthesis. Functionally, O-acetyltransferase; part of the gene cluster that mediates the biosynthesis of azaphilone pigments (MonAzPs), a complex mixture of compounds with a common azaphilone skeleton very widely used as food colorants. PigM and pigO are involved in the elimination of the omega-1 alcohol with pigM acting as an O-acetyltransferase that synthesizes the O-11 acetyl intermediate whereas pigO eliminates acetic acid to yield an intermediate with a C10(11) double bond. The first step of the pathway is performed by the nrPKS pigA that forms the hexaketide precursor from successive condensations of five malonyl-CoA units, with a simple acetyl-CoA starter unit. The role of esterase pigG is not clear, but it may play at most a supplementary role in the formation of the benzaldehyde produced by the pigA nrPKS. This very reactive benzaldehyde is intercepted by the pigC ketoreductase that to provide the first stable enzyme-free MonAzPs intermediate, 6-(4-hydroxy-2-oxopentyl)-3-methyl-2,4-dioxocyclohexane carbaldehyde, also known as M7PKS-1. The FAD-dependent monooxygenase pigN hydroxylates M7PKS-1 at C-4, which triggers the formation of the pyran ring. PigJ, pigK and pigD are involved in the acetylation of the pyran ring. PigJ and pigK form the two subunits of a dedicated fungal FAS that produces the side chain fatty acyl moiety of MonAzPs and pigD transfers the fatty acyl chain to the C-4 alcohol. PigM and pigO are involved in the elimination of the omega-1 alcohol. PigM acts as an O-acetyltransferase that synthesizes the putative O-11 acetyl intermediate whereas pigO eliminates acetic acid to yield an intermediate with a C10(11) double bond. The dehydration of the C-11 alcohol followed by the reduction of the C6(7) double bond by the NAD(P)H-dependent oxidoreductase pigE increases the electrophilicity of the C-5 ketone of the resulting acyl benzopyran. This in turn sets up the C-5 ketone for an intramolecular Knoevenagel aldol condensation with the C-20 enol of the side chain. This condensation affords the characteristic linear tricyclic carbon skeletons of the yellow pigments that serve as the common precursors for the classical yellow pigments monascin and ankaflavin, orange pigments rubopunctatin and monascorubrin, and red pigments ribropunctamine and monascorubramine. The FAD-dependent oxidoreductase pigF is especially invoved in the biosynthesis of orange and red pigments via desaturation of C6(7). The polypeptide is O-acetyltransferase pigM (Monascus ruber (Mold)).